Consider the following 496-residue polypeptide: Rhamnulokinase (496 aa).

13–17 (ASSGR) is a binding site for ATP. Residues G83 and 236–238 (HDT) each bind substrate. The Proton acceptor role is filled by D237. T259 serves as a coordination point for ATP. N296 contributes to the substrate binding site. Position 304 (Q304) interacts with ATP. C353 and C370 are joined by a disulfide. G402 provides a ligand contact to ATP. A disulfide bridge connects residues C413 and C417.

It belongs to the rhamnulokinase family. Mg(2+) serves as cofactor.

The enzyme catalyses L-rhamnulose + ATP = L-rhamnulose 1-phosphate + ADP + H(+). Its pathway is carbohydrate degradation; L-rhamnose degradation; glycerone phosphate from L-rhamnose: step 2/3. Its function is as follows. Involved in the catabolism of L-rhamnose (6-deoxy-L-mannose). Catalyzes the transfer of the gamma-phosphate group from ATP to the 1-hydroxyl group of L-rhamnulose to yield L-rhamnulose 1-phosphate. The sequence is that of Rhamnulokinase from Pectobacterium atrosepticum (strain SCRI 1043 / ATCC BAA-672) (Erwinia carotovora subsp. atroseptica).